A 314-amino-acid chain; its full sequence is uncharacterized protein (314 aa).

Residues 1–18 (MLIQILFLIILTLNCSYS) form the signal peptide. Residues Asn-68, Asn-72, Asn-106, and Asn-256 are each glycosylated (N-linked (GlcNAc...) asparagine).

The protein localises to the secreted. This is an uncharacterized protein from Caenorhabditis elegans.